The primary structure comprises 640 residues: 1-deoxy-D-xylulose-5-phosphate synthase (640 aa).

Thiamine diphosphate-binding positions include His-72 and 113–115; that span reads GHA. Residue Asp-144 participates in Mg(2+) binding. Thiamine diphosphate contacts are provided by residues 145 to 146, Asn-174, Tyr-287, and Glu-370; that span reads GA. A Mg(2+)-binding site is contributed by Asn-174.

The protein belongs to the transketolase family. DXPS subfamily. As to quaternary structure, homodimer. Requires Mg(2+) as cofactor. Thiamine diphosphate is required as a cofactor.

The catalysed reaction is D-glyceraldehyde 3-phosphate + pyruvate + H(+) = 1-deoxy-D-xylulose 5-phosphate + CO2. Its pathway is metabolic intermediate biosynthesis; 1-deoxy-D-xylulose 5-phosphate biosynthesis; 1-deoxy-D-xylulose 5-phosphate from D-glyceraldehyde 3-phosphate and pyruvate: step 1/1. Functionally, catalyzes the acyloin condensation reaction between C atoms 2 and 3 of pyruvate and glyceraldehyde 3-phosphate to yield 1-deoxy-D-xylulose-5-phosphate (DXP). The chain is 1-deoxy-D-xylulose-5-phosphate synthase from Synechocystis sp. (strain ATCC 27184 / PCC 6803 / Kazusa).